The chain runs to 691 residues: Elongation factor G (691 aa).

The tr-type G domain maps to 8-283 (KKVRNIGIAA…AVVAYLPAPD (276 aa)). Residues 17–24 (AHIDAGKT), 81–85 (DTPGH), and 135–138 (NKMD) contribute to the GTP site.

This sequence belongs to the TRAFAC class translation factor GTPase superfamily. Classic translation factor GTPase family. EF-G/EF-2 subfamily.

The protein resides in the cytoplasm. In terms of biological role, catalyzes the GTP-dependent ribosomal translocation step during translation elongation. During this step, the ribosome changes from the pre-translocational (PRE) to the post-translocational (POST) state as the newly formed A-site-bound peptidyl-tRNA and P-site-bound deacylated tRNA move to the P and E sites, respectively. Catalyzes the coordinated movement of the two tRNA molecules, the mRNA and conformational changes in the ribosome. The chain is Elongation factor G from Campylobacter jejuni subsp. jejuni serotype O:6 (strain 81116 / NCTC 11828).